We begin with the raw amino-acid sequence, 93 residues long: Integration host factor subunit beta (93 aa).

This sequence belongs to the bacterial histone-like protein family. Heterodimer of an alpha and a beta chain.

This protein is one of the two subunits of integration host factor, a specific DNA-binding protein that functions in genetic recombination as well as in transcriptional and translational control. In Tolumonas auensis (strain DSM 9187 / NBRC 110442 / TA 4), this protein is Integration host factor subunit beta.